The chain runs to 475 residues: AAA-ATPase At1g43910 (475 aa).

Residues 11 to 28 traverse the membrane as a helical segment; sequence VSAVFSLYTSFSAITMLF. Thr-85 is modified (phosphothreonine). 246–253 provides a ligand contact to ATP; that stretch reads GPPGTGKS. Disordered regions lie at residues 306-328 and 453-475; these read SRRRQSKKKEEDGGEDDGEPQKR and KGEDSSVEEEGEIEDAETKEAET. Residues 457-467 are compositionally biased toward acidic residues; the sequence is SSVEEEGEIED.

This sequence belongs to the AAA ATPase family. BCS1 subfamily. It depends on Mg(2+) as a cofactor. Expressed in developing shoots.

The protein localises to the membrane. The enzyme catalyses ATP + H2O = ADP + phosphate + H(+). The chain is AAA-ATPase At1g43910 from Arabidopsis thaliana (Mouse-ear cress).